A 913-amino-acid polypeptide reads, in one-letter code: E3 ubiquitin-protein ligase ZNRF3 (913 aa).

The disordered stretch occupies residues 1–32; the sequence is MRPRSGGRPGAPGRRRRRLRRGPRGRRLPPPP. A signal peptide spans 1-52; the sequence is MRPRSGGRPGAPGRRRRRLRRGPRGRRLPPPPPLPLLLGLLLAAAGPGAARA. A compositionally biased stretch (basic residues) spans 13 to 27; the sequence is GRRRRRLRRGPRGRR. Residues 53 to 216 lie on the Extracellular side of the membrane; that stretch reads KETAFVEVVL…PRQPTEYFDM (164 aa). A helical transmembrane segment spans residues 217–237; that stretch reads GIFLAFFVVVSLVCLILLVKI. Residues 238–913 lie on the Cytoplasmic side of the membrane; the sequence is KLKQRRSQNS…GSGPGIGTGA (676 aa). The RING-type; atypical zinc-finger motif lies at 290 to 331; it reads CAICLEKYIDGEELRVIPCTHRFHRKCVDPWLLQHHTCPHCR. Disordered stretches follow at residues 601–669 and 855–913; these read AVHL…GLEV and REEE…GTGA. Polar residues-rich tracts occupy residues 634-664 and 881-890; these read SGDQ…STSE and ASLSSAPQDT. Positions 903–913 are enriched in gly residues; sequence PGSGPGIGTGA.

Belongs to the ZNRF3 family. Interacts with LRP6, FZD4, FZD5, FZD6 and FZD8. Interacts with RSPO1; interaction promotes indirect interaction with LGR4 and membrane clearance of ZNRF3. Interacts with LMBR1L.

It is found in the cell membrane. It carries out the reaction S-ubiquitinyl-[E2 ubiquitin-conjugating enzyme]-L-cysteine + [acceptor protein]-L-lysine = [E2 ubiquitin-conjugating enzyme]-L-cysteine + N(6)-ubiquitinyl-[acceptor protein]-L-lysine.. It functions in the pathway protein modification; protein ubiquitination. Negatively regulated by R-spondin proteins such as RSPO1: interaction with RSPO1 induces the indirect association between ZNRF3 and LGR4, promoting membrane clearance of ZNRF3. Functionally, E3 ubiquitin-protein ligase that acts as a negative regulator of the Wnt signaling pathway by mediating the ubiquitination and subsequent degradation of Wnt receptor complex components Frizzled and LRP6. Acts on both canonical and non-canonical Wnt signaling pathway. Acts as a tumor suppressor in the intestinal stem cell zone by inhibiting the Wnt signaling pathway, thereby restricting the size of the intestinal stem cell zone. Along with RSPO2 and RNF43, constitutes a master switch that governs limb specification. The sequence is that of E3 ubiquitin-protein ligase ZNRF3 (Znrf3) from Mus musculus (Mouse).